Here is a 436-residue protein sequence, read N- to C-terminus: p-aminobenzoyl-glutamate hydrolase subunit A (436 aa).

This sequence belongs to the peptidase M20 family. In terms of assembly, forms a heterodimer with AbgB. Mn(2+) is required as a cofactor.

Its function is as follows. Component of the p-aminobenzoyl-glutamate hydrolase multicomponent enzyme system which catalyzes the cleavage of p-aminobenzoyl-glutamate (PABA-GLU) to form p-aminobenzoate (PABA) and glutamate. AbgAB does not degrade dipeptides and the physiological role of abgABT should be clarified. This is p-aminobenzoyl-glutamate hydrolase subunit A (abgA) from Escherichia coli (strain K12).